Consider the following 1342-residue polypeptide: DNA-directed RNA polymerase subunit beta (1342 aa).

This sequence belongs to the RNA polymerase beta chain family. The RNAP catalytic core consists of 2 alpha, 1 beta, 1 beta' and 1 omega subunit. When a sigma factor is associated with the core the holoenzyme is formed, which can initiate transcription.

The catalysed reaction is RNA(n) + a ribonucleoside 5'-triphosphate = RNA(n+1) + diphosphate. Its function is as follows. DNA-dependent RNA polymerase catalyzes the transcription of DNA into RNA using the four ribonucleoside triphosphates as substrates. The sequence is that of DNA-directed RNA polymerase subunit beta from Actinobacillus pleuropneumoniae serotype 5b (strain L20).